A 251-amino-acid polypeptide reads, in one-letter code: Ubiquinone/menaquinone biosynthesis C-methyltransferase UbiE (251 aa).

Residues T74, D95, N123–A124, and S140 contribute to the S-adenosyl-L-methionine site.

The protein belongs to the class I-like SAM-binding methyltransferase superfamily. MenG/UbiE family.

It catalyses the reaction a 2-demethylmenaquinol + S-adenosyl-L-methionine = a menaquinol + S-adenosyl-L-homocysteine + H(+). It carries out the reaction a 2-methoxy-6-(all-trans-polyprenyl)benzene-1,4-diol + S-adenosyl-L-methionine = a 5-methoxy-2-methyl-3-(all-trans-polyprenyl)benzene-1,4-diol + S-adenosyl-L-homocysteine + H(+). Its pathway is quinol/quinone metabolism; menaquinone biosynthesis; menaquinol from 1,4-dihydroxy-2-naphthoate: step 2/2. The protein operates within cofactor biosynthesis; ubiquinone biosynthesis. Methyltransferase required for the conversion of demethylmenaquinol (DMKH2) to menaquinol (MKH2) and the conversion of 2-polyprenyl-6-methoxy-1,4-benzoquinol (DDMQH2) to 2-polyprenyl-3-methyl-6-methoxy-1,4-benzoquinol (DMQH2). The protein is Ubiquinone/menaquinone biosynthesis C-methyltransferase UbiE of Serratia proteamaculans (strain 568).